Consider the following 324-residue polypeptide: COP9 signalosome complex subunit 6 (324 aa).

An MPN domain is found at V38–I171.

It belongs to the peptidase M67A family. CSN6 subfamily. As to quaternary structure, component of the CSN complex, composed of COPS1/GPS1, COPS2, COPS3, COPS4, COPS5, COPS6, COPS7 (COPS7A or COPS7B), COPS8 and COPS9. In the complex, it probably interacts directly with COPS2, COPS4, COPS5, COPS7 (COPS7A or COPS7B) and COPS9. Interacts with the translation initiation factor EIF3S6. Interacts weakly with RBX1. Directly interacts with COP1 and 14-3-3 protein sigma/SFN. Interacts with ERCC6.

It is found in the cytoplasm. Its subcellular location is the nucleus. Component of the COP9 signalosome complex (CSN), a complex involved in various cellular and developmental processes. The CSN complex is an essential regulator of the ubiquitin (Ubl) conjugation pathway by mediating the deneddylation of the cullin subunits of SCF-type E3 ligase complexes, leading to decrease the Ubl ligase activity of SCF-type complexes such as SCF, CSA or DDB2. The complex is also involved in phosphorylation of p53/TP53, c-jun/JUN, IkappaBalpha/NFKBIA, ITPK1 and IRF8, possibly via its association with CK2 and PKD kinases. CSN-dependent phosphorylation of TP53 and JUN promotes and protects degradation by the Ubl system, respectively. Has some glucocorticoid receptor-responsive activity. Stabilizes COP1 through reducing COP1 auto-ubiquitination and decelerating COP1 turnover rate, hence regulates the ubiquitination of COP1 targets, including SFN. The sequence is that of COP9 signalosome complex subunit 6 (Cops6) from Mus musculus (Mouse).